An 813-amino-acid polypeptide reads, in one-letter code: Cadherin-22 (813 aa).

A signal peptide spans 1–33; sequence MRPRPAGALRAGAALSPVLLLLLLLQLLGHLWA. Over 34–621 the chain is Extracellular; it reads ASTPAPSSLS…AFVMAASLSP (588 aa). Cadherin domains lie at 61 to 165, 166 to 274, 275 to 391, 392 to 495, and 496 to 613; these read WVWN…EPRF, LHGP…PPRF, PQKM…PPEF, RPPS…NPPE, and LATP…TTAF. Asparagine 159 carries N-linked (GlcNAc...) asparagine glycosylation. Asparagine 463 and asparagine 609 each carry an N-linked (GlcNAc...) asparagine glycan. A helical transmembrane segment spans residues 622 to 642; sequence GALIALLVCVLILVVLALLIL. Residues 643 to 813 lie on the Cytoplasmic side of the membrane; the sequence is TLRRHHKSHL…HRGDDEAPAS (171 aa). The tract at residues 696–726 is disordered; sequence GGDPGGGAASPPQAASSSERHSLPRGPSSPE.

As to expression, strongly expressed in the pituitary gland and the brain (in the inner granular and glomerular layers of the olfactory bulb, anterior olfactory nucleus, primary olfactory cortex, Purkinje cell layer of cerebellum, and pineal gland). Low expression in lung and heart. No expression in submandibular gland, thymus, liver, spleen, adrenal, and kidney.

The protein resides in the cell membrane. Functionally, cadherins are calcium-dependent cell adhesion proteins. They preferentially interact with themselves in a homophilic manner in connecting cells; cadherins may thus contribute to the sorting of heterogeneous cell types. PB-cadherins may have a role in the morphological organization of pituitary gland and brain tissues. This Rattus norvegicus (Rat) protein is Cadherin-22 (Cdh22).